The primary structure comprises 256 residues: MYLEQLKEVNPLTICITNNVVKNFTANGLLALGASPAMSECIEDLEDLLKVANALLINIGTLTKESWQLYQEAIKIANKNQVPVVLDPVAAGASRFRLEVSLDLLKNYSISLLRGNGSEIAALVGEKQASKGADGGKVADLESIAVKANQVFDVPVVVTGETDAIAVRGEVRLLQNGSPLMPLVTGTGCLLGAVLAAFIGSSDRSDDLACLTEAMTVYNVSGEIAEKVAKGKGVGSFQVAFLDALSQMKSEMIMDK.

Met-38 provides a ligand contact to substrate. Positions 114 and 159 each coordinate ATP. Gly-186 contributes to the substrate binding site.

It belongs to the Thz kinase family. Requires Mg(2+) as cofactor.

It carries out the reaction 5-(2-hydroxyethyl)-4-methylthiazole + ATP = 4-methyl-5-(2-phosphooxyethyl)-thiazole + ADP + H(+). It functions in the pathway cofactor biosynthesis; thiamine diphosphate biosynthesis; 4-methyl-5-(2-phosphoethyl)-thiazole from 5-(2-hydroxyethyl)-4-methylthiazole: step 1/1. Its function is as follows. Catalyzes the phosphorylation of the hydroxyl group of 4-methyl-5-beta-hydroxyethylthiazole (THZ). The chain is Hydroxyethylthiazole kinase from Streptococcus agalactiae serotype III (strain NEM316).